A 119-amino-acid chain; its full sequence is Small ribosomal subunit protein bS16 (119 aa).

The segment covering 89–103 (TTKSTKEKAATDKKA) has biased composition (basic and acidic residues). Residues 89-119 (TTKSTKEKAATDKKAKVTKKPKTKTTTDVKK) are disordered.

It belongs to the bacterial ribosomal protein bS16 family.

The sequence is that of Small ribosomal subunit protein bS16 from Spiroplasma kunkelii.